A 244-amino-acid polypeptide reads, in one-letter code: High frequency lysogenization protein HflD homolog (244 aa).

Belongs to the HflD family.

It localises to the cytoplasm. Its subcellular location is the cell inner membrane. The chain is High frequency lysogenization protein HflD homolog from Acinetobacter baumannii (strain ATCC 17978 / DSM 105126 / CIP 53.77 / LMG 1025 / NCDC KC755 / 5377).